The following is a 162-amino-acid chain: Glycine cleavage system H protein, mitochondrial (162 aa).

The transit peptide at 1 to 31 (MALRMWASSTANALRLSSATRPHFSPLSRCF) directs the protein to the mitochondrion. In terms of domain architecture, Lipoyl-binding spans 53–135 (VATIGITDHA…YEDGWMIKVK (83 aa)). K94 is modified (N6-lipoyllysine).

It belongs to the GcvH family. In terms of assembly, the glycine cleavage system is composed of four proteins: P, T, L and H. Requires (R)-lipoate as cofactor.

The protein resides in the mitochondrion. Functionally, the glycine cleavage system catalyzes the degradation of glycine. The H protein shuttles the methylamine group of glycine from the P protein to the T protein. This Flaveria anomala (Yellowtops) protein is Glycine cleavage system H protein, mitochondrial (GDCSH).